Consider the following 380-residue polypeptide: Cytochrome b (380 aa).

The next 4 helical transmembrane spans lie at 34–54, 78–99, 114–134, and 179–199; these read FGSLLGICLITQIITGLLLAM, WLIRHLHANGASFFFICIYLHI, WNIGVILLLTLMATAFVGYVL, and LFALHFLLPFVIAGLTLVHLT. Residues His84 and His98 each contribute to the heme b site. Residues His183 and His197 each coordinate heme b. His202 provides a ligand contact to a ubiquinone. Helical transmembrane passes span 227–247, 289–309, 321–341, and 348–368; these read IKDLLGFVLMLTPLIAMALFA, LGGVLALAASVLVLFLIPLLH, LSQMLFWTLVADLLILTWVGS, and FIIIGQLASLAYFTIILVLFP.

It belongs to the cytochrome b family. The cytochrome bc1 complex contains 11 subunits: 3 respiratory subunits (MT-CYB, CYC1 and UQCRFS1), 2 core proteins (UQCRC1 and UQCRC2) and 6 low-molecular weight proteins (UQCRH/QCR6, UQCRB/QCR7, UQCRQ/QCR8, UQCR10/QCR9, UQCR11/QCR10 and a cleavage product of UQCRFS1). This cytochrome bc1 complex then forms a dimer. Heme b is required as a cofactor.

The protein resides in the mitochondrion inner membrane. In terms of biological role, component of the ubiquinol-cytochrome c reductase complex (complex III or cytochrome b-c1 complex) that is part of the mitochondrial respiratory chain. The b-c1 complex mediates electron transfer from ubiquinol to cytochrome c. Contributes to the generation of a proton gradient across the mitochondrial membrane that is then used for ATP synthesis. This is Cytochrome b (MT-CYB) from Aphelocoma coerulescens (Florida scrub-jay).